Consider the following 273-residue polypeptide: Vitamin B12-binding protein (273 aa).

A signal peptide spans 1–18; the sequence is MMKTLSSLLLLFSVSLQA. One can recognise a Fe/B12 periplasmic-binding domain in the interval 23–273; that stretch reads RVISLAPHAT…EHFASIEQKR (251 aa). An intrachain disulfide couples Cys-183 to Cys-263.

The protein belongs to the BtuF family. The complex is composed of two ATP-binding proteins (BtuD), two transmembrane proteins (BtuC) and a solute-binding protein (BtuF).

It is found in the periplasm. In terms of biological role, part of the ABC transporter complex BtuCDF involved in vitamin B12 import. Binds vitamin B12 and delivers it to the periplasmic surface of BtuC. This Vibrio vulnificus (strain CMCP6) protein is Vitamin B12-binding protein.